Consider the following 381-residue polypeptide: DNA replication and repair protein RecF (381 aa).

Residue 30–37 coordinates ATP; it reads GENAQGKT.

The protein belongs to the RecF family.

The protein resides in the cytoplasm. Its function is as follows. The RecF protein is involved in DNA metabolism; it is required for DNA replication and normal SOS inducibility. RecF binds preferentially to single-stranded, linear DNA. It also seems to bind ATP. This is DNA replication and repair protein RecF from Lactobacillus delbrueckii subsp. bulgaricus (strain ATCC 11842 / DSM 20081 / BCRC 10696 / JCM 1002 / NBRC 13953 / NCIMB 11778 / NCTC 12712 / WDCM 00102 / Lb 14).